Here is a 103-residue protein sequence, read N- to C-terminus: DNA-binding protein TRF1 (103 aa).

Functionally, DNA-binding protein that recognizes the inverted terminal repeats of the pGKl linear DNA plasmids. This is DNA-binding protein TRF1 (TRF1) from Kluyveromyces lactis (strain ATCC 8585 / CBS 2359 / DSM 70799 / NBRC 1267 / NRRL Y-1140 / WM37) (Yeast).